We begin with the raw amino-acid sequence, 103 residues long: Pyrimidine/purine nucleoside phosphorylase (103 aa).

It belongs to the nucleoside phosphorylase PpnP family.

The enzyme catalyses a purine D-ribonucleoside + phosphate = a purine nucleobase + alpha-D-ribose 1-phosphate. The catalysed reaction is adenosine + phosphate = alpha-D-ribose 1-phosphate + adenine. It carries out the reaction cytidine + phosphate = cytosine + alpha-D-ribose 1-phosphate. It catalyses the reaction guanosine + phosphate = alpha-D-ribose 1-phosphate + guanine. The enzyme catalyses inosine + phosphate = alpha-D-ribose 1-phosphate + hypoxanthine. The catalysed reaction is thymidine + phosphate = 2-deoxy-alpha-D-ribose 1-phosphate + thymine. It carries out the reaction uridine + phosphate = alpha-D-ribose 1-phosphate + uracil. It catalyses the reaction xanthosine + phosphate = alpha-D-ribose 1-phosphate + xanthine. In terms of biological role, catalyzes the phosphorolysis of diverse nucleosides, yielding D-ribose 1-phosphate and the respective free bases. Can use uridine, adenosine, guanosine, cytidine, thymidine, inosine and xanthosine as substrates. Also catalyzes the reverse reactions. This Shewanella sp. (strain ANA-3) protein is Pyrimidine/purine nucleoside phosphorylase.